Consider the following 134-residue polypeptide: Translation initiation factor 2 subunit beta (134 aa).

The protein belongs to the eIF-2-beta/eIF-5 family. Heterotrimer composed of an alpha, a beta and a gamma chain.

EIF-2 functions in the early steps of protein synthesis by forming a ternary complex with GTP and initiator tRNA. The protein is Translation initiation factor 2 subunit beta of Pyrobaculum neutrophilum (strain DSM 2338 / JCM 9278 / NBRC 100436 / V24Sta) (Thermoproteus neutrophilus).